Here is a 71-residue protein sequence, read N- to C-terminus: Vitellogenin-B1 (71 aa).

Positions 1-15 (MRGIILAQLLALAGS) are cleaved as a signal peptide. Residues 24–71 (FSESKPYVYNYEGIILNGIPENGLARSGIKLNCKAEISGYAQRSYMLK) enclose the Vitellogenin domain.

As to expression, produced by the liver, secreted into the blood and then sequestered by receptor mediated endocytosis into growing oocytes, where it is generally cleaved, giving rise to the respective yolk components.

Its function is as follows. Precursor of the major egg-yolk proteins that are sources of nutrients during early development of oviparous organisms. This chain is Vitellogenin-B1, found in Xenopus laevis (African clawed frog).